Consider the following 681-residue polypeptide: PTS system glucose-specific EIICBA component (681 aa).

Residues 3-414 (KKLFGQLQRI…LKYKTPGRED (412 aa)) enclose the PTS EIIC type-1 domain. 10 helical membrane passes run 16 to 36 (LMLP…GTAM), 73 to 93 (MIFA…AAIA), 126 to 146 (ILGI…GALA), 170 to 190 (FVPI…ALIW), 199 to 219 (AFST…FGFI), 273 to 293 (FMQG…LAIY), 303 to 323 (VVAG…ITEP), 328 to 348 (FLFV…LSFL), 355 to 375 (LHLG…GILP), and 383 to 403 (VIPV…FLIV). A PTS EIIB type-1 domain is found at 425–506 (TELPYAVLEA…QQIMNGQVVE (82 aa)). Catalysis depends on C447, which acts as the Phosphocysteine intermediate; for EIIB activity. Positions 551-655 (DQVFSEKMMG…SDITPIIVTQ (105 aa)) constitute a PTS EIIA type-1 domain. The active-site Tele-phosphohistidine intermediate; for EIIA activity is the H603.

The protein resides in the cell membrane. It carries out the reaction N(pros)-phospho-L-histidyl-[protein] + D-glucose(out) = D-glucose 6-phosphate(in) + L-histidyl-[protein]. In terms of biological role, the phosphoenolpyruvate-dependent sugar phosphotransferase system (sugar PTS), a major carbohydrate active transport system, catalyzes the phosphorylation of incoming sugar substrates concomitantly with their translocation across the cell membrane. This system is involved in glucose transport. This Staphylococcus aureus (strain bovine RF122 / ET3-1) protein is PTS system glucose-specific EIICBA component (ptsG).